The following is a 413-amino-acid chain: Serine hydroxymethyltransferase (413 aa).

(6S)-5,6,7,8-tetrahydrofolate-binding positions include L119 and 123–125; that span reads GHL. The residue at position 228 (K228) is an N6-(pyridoxal phosphate)lysine. (6S)-5,6,7,8-tetrahydrofolate is bound at residue 351–353; the sequence is SPF.

It belongs to the SHMT family. As to quaternary structure, homodimer. It depends on pyridoxal 5'-phosphate as a cofactor.

Its subcellular location is the cytoplasm. It carries out the reaction (6R)-5,10-methylene-5,6,7,8-tetrahydrofolate + glycine + H2O = (6S)-5,6,7,8-tetrahydrofolate + L-serine. The protein operates within one-carbon metabolism; tetrahydrofolate interconversion. Its pathway is amino-acid biosynthesis; glycine biosynthesis; glycine from L-serine: step 1/1. In terms of biological role, catalyzes the reversible interconversion of serine and glycine with tetrahydrofolate (THF) serving as the one-carbon carrier. This reaction serves as the major source of one-carbon groups required for the biosynthesis of purines, thymidylate, methionine, and other important biomolecules. Also exhibits THF-independent aldolase activity toward beta-hydroxyamino acids, producing glycine and aldehydes, via a retro-aldol mechanism. The chain is Serine hydroxymethyltransferase from Clostridium botulinum (strain Langeland / NCTC 10281 / Type F).